The chain runs to 298 residues: uncharacterized protein (298 aa).

The protein belongs to the glycosyltransferase 2 family.

This is an uncharacterized protein from Mycoplasma genitalium (strain ATCC 33530 / DSM 19775 / NCTC 10195 / G37) (Mycoplasmoides genitalium).